The chain runs to 347 residues: Methylthioribose-1-phosphate isomerase (347 aa).

Residues R45–A47, R88, and Q197 contribute to the substrate site. The active-site Proton donor is the D238. A substrate-binding site is contributed by N248–K249.

It belongs to the eIF-2B alpha/beta/delta subunits family. MtnA subfamily.

The enzyme catalyses 5-(methylsulfanyl)-alpha-D-ribose 1-phosphate = 5-(methylsulfanyl)-D-ribulose 1-phosphate. The protein operates within amino-acid biosynthesis; L-methionine biosynthesis via salvage pathway; L-methionine from S-methyl-5-thio-alpha-D-ribose 1-phosphate: step 1/6. Functionally, catalyzes the interconversion of methylthioribose-1-phosphate (MTR-1-P) into methylthioribulose-1-phosphate (MTRu-1-P). The chain is Methylthioribose-1-phosphate isomerase from Nostoc sp. (strain PCC 7120 / SAG 25.82 / UTEX 2576).